The chain runs to 341 residues: Retinol dehydrogenase 10-B (341 aa).

A helical; Signal-anchor transmembrane segment spans residues 3-23 (IVLEFFLVTFRVLWAFVLAAA). Residue 40 to 64 (LITGAGSGLGRLFALEFARRRAQLV) participates in NADP(+) binding. Position 197 (Ser-197) interacts with substrate. Tyr-210 (proton acceptor) is an active-site residue.

Belongs to the short-chain dehydrogenases/reductases (SDR) family.

Its subcellular location is the microsome membrane. The protein resides in the endoplasmic reticulum membrane. The catalysed reaction is all-trans-retinol + NADP(+) = all-trans-retinal + NADPH + H(+). It participates in cofactor metabolism; retinol metabolism. In terms of biological role, retinol dehydrogenase with a clear preference for NADP. Converts all-trans-retinol to all-trans-retinal. Has no detectable activity towards 11-cis-retinol, 9-cis-retinol and 13-cis-retinol. The polypeptide is Retinol dehydrogenase 10-B (rdh10-b) (Xenopus laevis (African clawed frog)).